Consider the following 302-residue polypeptide: ATP synthase gamma chain (302 aa).

This sequence belongs to the ATPase gamma chain family. As to quaternary structure, F-type ATPases have 2 components, CF(1) - the catalytic core - and CF(0) - the membrane proton channel. CF(1) has five subunits: alpha(3), beta(3), gamma(1), delta(1), epsilon(1). CF(0) has three main subunits: a, b and c.

The protein resides in the cell inner membrane. Functionally, produces ATP from ADP in the presence of a proton gradient across the membrane. The gamma chain is believed to be important in regulating ATPase activity and the flow of protons through the CF(0) complex. This Bartonella bacilliformis (strain ATCC 35685 / KC583 / Herrer 020/F12,63) protein is ATP synthase gamma chain.